Consider the following 226-residue polypeptide: Thiamine-phosphate synthase (226 aa).

4-amino-2-methyl-5-(diphosphooxymethyl)pyrimidine contacts are provided by residues 46–50 (QFRDK) and aspartate 83. 2 residues coordinate Mg(2+): aspartate 84 and aspartate 103. Residue serine 122 coordinates 4-amino-2-methyl-5-(diphosphooxymethyl)pyrimidine. 149 to 151 (TQS) contributes to the 2-[(2R,5Z)-2-carboxy-4-methylthiazol-5(2H)-ylidene]ethyl phosphate binding site. Lysine 152 is a binding site for 4-amino-2-methyl-5-(diphosphooxymethyl)pyrimidine. 2-[(2R,5Z)-2-carboxy-4-methylthiazol-5(2H)-ylidene]ethyl phosphate contacts are provided by residues glycine 181 and 201-202 (IT).

Belongs to the thiamine-phosphate synthase family. Mg(2+) is required as a cofactor.

The catalysed reaction is 2-[(2R,5Z)-2-carboxy-4-methylthiazol-5(2H)-ylidene]ethyl phosphate + 4-amino-2-methyl-5-(diphosphooxymethyl)pyrimidine + 2 H(+) = thiamine phosphate + CO2 + diphosphate. It catalyses the reaction 2-(2-carboxy-4-methylthiazol-5-yl)ethyl phosphate + 4-amino-2-methyl-5-(diphosphooxymethyl)pyrimidine + 2 H(+) = thiamine phosphate + CO2 + diphosphate. It carries out the reaction 4-methyl-5-(2-phosphooxyethyl)-thiazole + 4-amino-2-methyl-5-(diphosphooxymethyl)pyrimidine + H(+) = thiamine phosphate + diphosphate. The protein operates within cofactor biosynthesis; thiamine diphosphate biosynthesis; thiamine phosphate from 4-amino-2-methyl-5-diphosphomethylpyrimidine and 4-methyl-5-(2-phosphoethyl)-thiazole: step 1/1. Functionally, condenses 4-methyl-5-(beta-hydroxyethyl)thiazole monophosphate (THZ-P) and 2-methyl-4-amino-5-hydroxymethyl pyrimidine pyrophosphate (HMP-PP) to form thiamine monophosphate (TMP). This Haemophilus influenzae (strain 86-028NP) protein is Thiamine-phosphate synthase.